Reading from the N-terminus, the 266-residue chain is uncharacterized protein (266 aa).

The next 8 membrane-spanning stretches (helical) occupy residues I9–F29, T37–Y57, L69–L89, F123–T143, Y153–A173, L184–L204, S216–L236, and T246–V266.

Its subcellular location is the cell membrane. This is an uncharacterized protein from Haemophilus influenzae (strain ATCC 51907 / DSM 11121 / KW20 / Rd).